The primary structure comprises 253 residues: Triosephosphate isomerase (253 aa).

Substrate is bound at residue 9–11 (NWK). The Electrophile role is filled by His97. The Proton acceptor role is filled by Glu169. Substrate is bound by residues Gly175, Ser215, and 236–237 (GG).

This sequence belongs to the triosephosphate isomerase family. Homodimer.

Its subcellular location is the cytoplasm. The catalysed reaction is D-glyceraldehyde 3-phosphate = dihydroxyacetone phosphate. It functions in the pathway carbohydrate biosynthesis; gluconeogenesis. Its pathway is carbohydrate degradation; glycolysis; D-glyceraldehyde 3-phosphate from glycerone phosphate: step 1/1. In terms of biological role, involved in the gluconeogenesis. Catalyzes stereospecifically the conversion of dihydroxyacetone phosphate (DHAP) to D-glyceraldehyde-3-phosphate (G3P). This is Triosephosphate isomerase from Staphylococcus aureus (strain Mu50 / ATCC 700699).